A 278-amino-acid polypeptide reads, in one-letter code: Putative transcription factor kapC (278 aa).

Residues 1–10 show a composition bias toward pro residues; that stretch reads MQPALAPAPH. Positions 1 to 121 are disordered; sequence MQPALAPAPH…QNRAAQRAFR (121 aa). The span at 56-68 shows a compositional bias: polar residues; that stretch reads PTATTSPRDQNNI. In terms of domain architecture, bZIP spans 103–166; it reads PLSTSKRAAQ…EYVINLQSRL (64 aa). Residues 104 to 127 form a basic motif region; it reads LSTSKRAAQNRAAQRAFRQRKESY. Over residues 109–119 the composition is skewed to low complexity; it reads RAAQNRAAQRA. A leucine-zipper region spans residues 131–162; the sequence is LEEQVKEYEVMSQEYKALQAENYQLREYVINL. The interval 173 to 278 is disordered; it reads VPELPGNIDL…PPTHGLPMVS (106 aa). The segment covering 198–214 has biased composition (low complexity); the sequence is PGQAGASAPPQGSPQSQ. The span at 215 to 226 shows a compositional bias: polar residues; it reads VSIANDDMNSLN. Basic and acidic residues predominate over residues 254–269; the sequence is GRGDETADPSETKTEP.

Belongs to the bZIP family.

The protein localises to the nucleus. Putative transcription factor. In Emericella nidulans (strain FGSC A4 / ATCC 38163 / CBS 112.46 / NRRL 194 / M139) (Aspergillus nidulans), this protein is Putative transcription factor kapC (kapC).